The following is a 253-amino-acid chain: Hydroxypyruvate/pyruvate aldolase (253 aa).

Residue His48 is the Proton acceptor of the active site. Residues Glu151 and Asp177 each contribute to the a divalent metal cation site.

The protein belongs to the HpcH/HpaI aldolase family. The cofactor is a divalent metal cation.

The enzyme catalyses D-glyceraldehyde + pyruvate = 2-dehydro-3-deoxy-L-galactonate. Aldolase which can catalyze in vitro the aldolisation reaction between hydroxypyruvate (HPA) or pyruvate (PA) and D-glyceraldehyde (D-GA). The condensation of pyruvate and D-glyceraldehyde produces 2-dehydro-3-deoxy-L-galactonate. Has weak activity with hydroxypyruvate and D-glyceraldehyde. The sequence is that of Hydroxypyruvate/pyruvate aldolase from Sagittula stellata (strain ATCC 700073 / DSM 11524 / E-37).